The sequence spans 622 residues: Pesticidal crystal protein Cry2Ac (622 aa).

The protein belongs to the delta endotoxin family.

In terms of biological role, promotes colloidosmotic lysis by binding to the midgut epithelial cells of lepidopteran larvae. Has low activity on dipteran larvae. This Bacillus thuringiensis protein is Pesticidal crystal protein Cry2Ac (cry2Ac).